Reading from the N-terminus, the 463-residue chain is Type IV secretion system protein PtlD homolog (463 aa).

The N-terminal stretch at 1–24 is a signal peptide; the sequence is MAGLSRILLSCTLACLLAGQAAQA. The next 5 membrane-spanning stretches (helical) occupy residues 118 to 138, 232 to 252, 253 to 273, 294 to 314, and 333 to 353; these read LQPL…YALL, WLLC…LAAS, LLIV…LFLV, ALVF…VLAG, and MLAA…VPLA. A compositionally biased stretch (low complexity) spans 376–410; sequence AHRQAAARQYAPRPAAAAAAAGPHQAGTYAASATP. The disordered stretch occupies residues 376 to 463; sequence AHRQAAARQY…RVLPRKPNLP (88 aa). A compositionally biased stretch (pro residues) spans 411-420; sequence APAPARPAPS. A compositionally biased stretch (basic and acidic residues) spans 441 to 455; it reads VRRDDRPAPAPDRRV.

The protein resides in the cell membrane. This chain is Type IV secretion system protein PtlD homolog (ptlD), found in Bordetella parapertussis (strain 12822 / ATCC BAA-587 / NCTC 13253).